Consider the following 227-residue polypeptide: Cytochrome c oxidase subunit 2 (227 aa).

The Mitochondrial intermembrane portion of the chain corresponds to 1-14 (MAYPFQLGLQDATS). Residues 15–45 (PIMEELMNFHDHTLMIVFLISSLVLYIISLM) form a helical membrane-spanning segment. At 46-59 (LTTKLTHTSTMDAQ) the chain is on the mitochondrial matrix side. The chain crosses the membrane as a helical span at residues 60–87 (EVETIWTILPAAILILIALPSLRILYMM). Over 88–227 (DEINNPALTV…YFENWSASMI (140 aa)) the chain is Mitochondrial intermembrane. The Cu cation site is built by H161, C196, E198, C200, H204, and M207. A Mg(2+)-binding site is contributed by E198. Y218 carries the phosphotyrosine modification.

Belongs to the cytochrome c oxidase subunit 2 family. Component of the cytochrome c oxidase (complex IV, CIV), a multisubunit enzyme composed of 14 subunits. The complex is composed of a catalytic core of 3 subunits MT-CO1, MT-CO2 and MT-CO3, encoded in the mitochondrial DNA, and 11 supernumerary subunits COX4I, COX5A, COX5B, COX6A, COX6B, COX6C, COX7A, COX7B, COX7C, COX8 and NDUFA4, which are encoded in the nuclear genome. The complex exists as a monomer or a dimer and forms supercomplexes (SCs) in the inner mitochondrial membrane with NADH-ubiquinone oxidoreductase (complex I, CI) and ubiquinol-cytochrome c oxidoreductase (cytochrome b-c1 complex, complex III, CIII), resulting in different assemblies (supercomplex SCI(1)III(2)IV(1) and megacomplex MCI(2)III(2)IV(2)). Found in a complex with TMEM177, COA6, COX18, COX20, SCO1 and SCO2. Interacts with TMEM177 in a COX20-dependent manner. Interacts with COX20. Interacts with COX16. It depends on Cu cation as a cofactor.

Its subcellular location is the mitochondrion inner membrane. It carries out the reaction 4 Fe(II)-[cytochrome c] + O2 + 8 H(+)(in) = 4 Fe(III)-[cytochrome c] + 2 H2O + 4 H(+)(out). Its function is as follows. Component of the cytochrome c oxidase, the last enzyme in the mitochondrial electron transport chain which drives oxidative phosphorylation. The respiratory chain contains 3 multisubunit complexes succinate dehydrogenase (complex II, CII), ubiquinol-cytochrome c oxidoreductase (cytochrome b-c1 complex, complex III, CIII) and cytochrome c oxidase (complex IV, CIV), that cooperate to transfer electrons derived from NADH and succinate to molecular oxygen, creating an electrochemical gradient over the inner membrane that drives transmembrane transport and the ATP synthase. Cytochrome c oxidase is the component of the respiratory chain that catalyzes the reduction of oxygen to water. Electrons originating from reduced cytochrome c in the intermembrane space (IMS) are transferred via the dinuclear copper A center (CU(A)) of subunit 2 and heme A of subunit 1 to the active site in subunit 1, a binuclear center (BNC) formed by heme A3 and copper B (CU(B)). The BNC reduces molecular oxygen to 2 water molecules using 4 electrons from cytochrome c in the IMS and 4 protons from the mitochondrial matrix. This is Cytochrome c oxidase subunit 2 (MT-CO2) from Lemniscomys barbarus (Barbary striped grass mouse).